Consider the following 178-residue polypeptide: Phosphopantetheine adenylyltransferase (178 aa).

Residue S8 participates in substrate binding. Residues 8–9 and H16 contribute to the ATP site; that span reads SF. Positions 40, 72, and 86 each coordinate substrate. ATP-binding positions include 87 to 89, E97, and 122 to 128; these read GLR and YSFLSSS.

It belongs to the bacterial CoaD family. In terms of assembly, homohexamer. Mg(2+) serves as cofactor.

It localises to the cytoplasm. It catalyses the reaction (R)-4'-phosphopantetheine + ATP + H(+) = 3'-dephospho-CoA + diphosphate. Its pathway is cofactor biosynthesis; coenzyme A biosynthesis; CoA from (R)-pantothenate: step 4/5. In terms of biological role, reversibly transfers an adenylyl group from ATP to 4'-phosphopantetheine, yielding dephospho-CoA (dPCoA) and pyrophosphate. The sequence is that of Phosphopantetheine adenylyltransferase from Picosynechococcus sp. (strain ATCC 27264 / PCC 7002 / PR-6) (Agmenellum quadruplicatum).